The primary structure comprises 1312 residues: DNA repair protein RAD50.L (1312 aa).

The ATP site is built by R13, N38, G39, G41, K42, T43, T44, V67, D69, and Q159. T43 is a binding site for Mg(2+). Q159 is a Mg(2+) binding site. Coiled-coil stretches lie at residues V203–E342, L415–R558, and I587–K628. Residues S635 to P734 enclose the Zinc-hook domain. C681 and C684 together coordinate Zn(2+). The stretch at L712–N1070 forms a coiled coil.

This sequence belongs to the SMC family. RAD50 subfamily. In terms of assembly, component of the MRN complex composed of two heterodimers RAD50 and MRE11 associated with a single NBN. It depends on Zn(2+) as a cofactor.

Its subcellular location is the nucleus. The protein resides in the chromosome. It is found in the telomere. The enzyme catalyses ATP + H2O = ADP + phosphate + H(+). Component of the MRN complex, which plays a central role in double-strand break (DSB) repair, DNA recombination, maintenance of telomere integrity and meiosis. The MRN complex is involved in the repair of DNA double-strand breaks (DSBs) via homologous recombination (HR), an error-free mechanism which primarily occurs during S and G2 phases. The complex (1) mediates the end resection of damaged DNA, which generates proper single-stranded DNA, a key initial steps in HR, and is (2) required for the recruitment of other repair factors and efficient activation of ATM and ATR upon DNA damage. The MRN complex possesses single-strand endonuclease activity and double-strand-specific 3'-5' exonuclease activity, which are provided by mre11, to initiate end resection, which is required for single-strand invasion and recombination. Within the complex, rad50 is both required to bind DNA ends and hold them in close proximity and regulate the activity of MRE11. Rad50 provides an ATP-dependent control of MRE11 by positioning DNA ends into the mre11 active site: ATP-binding induces a large structural change from an open form with accessible MRE11 nuclease sites into a closed form. The MRN complex is also required for DNA damage signaling via activation of the atm and atr kinases: the nuclease activity of mre11 is not required to activate ATM and ATR. The MRN complex promotes recruitment of topbp1 to DNA damage sites. The MRN complex and rbbp8/CtIP are also required for chromosome alignment during metaphase. This is DNA repair protein RAD50.L from Xenopus laevis (African clawed frog).